We begin with the raw amino-acid sequence, 32 residues long: Phospholipase A2 (32 aa).

Residues tyrosine 16, glycine 18, and glycine 20 each contribute to the Ca(2+) site.

The cofactor is Ca(2+). As to expression, expressed by the venom gland.

It localises to the secreted. It carries out the reaction a 1,2-diacyl-sn-glycero-3-phosphocholine + H2O = a 1-acyl-sn-glycero-3-phosphocholine + a fatty acid + H(+). PLA2 catalyzes the calcium-dependent hydrolysis of the 2-acyl groups in 3-sn-phosphoglycerides. This Micrurus lemniscatus (South American coral snake) protein is Phospholipase A2.